A 147-amino-acid polypeptide reads, in one-letter code: Large ribosomal subunit protein uL11 (147 aa).

This sequence belongs to the universal ribosomal protein uL11 family. As to quaternary structure, part of the ribosomal stalk of the 50S ribosomal subunit. Interacts with L10 and the large rRNA to form the base of the stalk. L10 forms an elongated spine to which L12 dimers bind in a sequential fashion forming a multimeric L10(L12)X complex. In terms of processing, one or more lysine residues are methylated.

Its function is as follows. Forms part of the ribosomal stalk which helps the ribosome interact with GTP-bound translation factors. This chain is Large ribosomal subunit protein uL11, found in Sorangium cellulosum (strain So ce56) (Polyangium cellulosum (strain So ce56)).